Here is a 190-residue protein sequence, read N- to C-terminus: Heme-binding protein 1 (190 aa).

It belongs to the HEBP family. In terms of assembly, monomer.

Its subcellular location is the cytoplasm. Functionally, may bind free porphyrinogens that may be present in the cell and thus facilitate removal of these potentially toxic compound. Binds with a high affinity to one molecule of heme or porphyrins. It binds metalloporphyrins, free porphyrins and N-methylprotoporphyrin with similar affinities. In Xenopus tropicalis (Western clawed frog), this protein is Heme-binding protein 1 (hebp1).